We begin with the raw amino-acid sequence, 144 residues long: Large ribosomal subunit protein uL15 (144 aa).

A disordered region spans residues 1-53 (MRLNTLSPAEGSKHASKRPGRGIGSGLGKTGGRGHKGQKSRSGGGVRRGFEGG). Gly residues predominate over residues 21-31 (RGIGSGLGKTG).

Belongs to the universal ribosomal protein uL15 family. Part of the 50S ribosomal subunit.

Its function is as follows. Binds to the 23S rRNA. The polypeptide is Large ribosomal subunit protein uL15 (Sodalis glossinidius (strain morsitans)).